A 322-amino-acid chain; its full sequence is Acetylglutamate kinase (322 aa).

Residues 85–86 (GG), R107, and N211 each bind substrate.

Belongs to the acetylglutamate kinase family. ArgB subfamily.

The protein localises to the cytoplasm. It carries out the reaction N-acetyl-L-glutamate + ATP = N-acetyl-L-glutamyl 5-phosphate + ADP. It functions in the pathway amino-acid biosynthesis; L-arginine biosynthesis; N(2)-acetyl-L-ornithine from L-glutamate: step 2/4. Catalyzes the ATP-dependent phosphorylation of N-acetyl-L-glutamate. In Methanosarcina barkeri (strain Fusaro / DSM 804), this protein is Acetylglutamate kinase.